We begin with the raw amino-acid sequence, 60 residues long: Ixodegrin-Ip (60 aa).

The first 21 residues, 1-21, serve as a signal peptide directing secretion; it reads MNAAFIAALFILGALTLDAMA. Positions 49–51 match the Cell attachment site motif; sequence RGD.

The protein belongs to the ixodegrin family. Contains 3 disulfide bonds. In terms of tissue distribution, expressed in salivary glands.

The protein resides in the secreted. Functionally, tick salivary platelet aggregation inhibitor that plays an important part in the anti-hemostatic strategy of ticks. Inhibits platelet aggregation induced by ADP, thrombin and thromboxane A2 (TXA2). Blocks platelet adhesion to soluble collagen (most probably through the binding to alpha-2/beta-1 integrin (ITGA2/ITGB1)) and binds to purified glycoprotein IIb/IIIa (ITGA2B/ITGB3) in a dose-dependent manner. In vivo, reduces thrombus weight effectively in a rat arteriovenous shunt model and inhibits thrombosis in a carrageenan-induced mouse tail thrombosis model. The protein is Ixodegrin-Ip of Ixodes pacificus (Western black-legged tick).